Consider the following 398-residue polypeptide: Na(+)/H(+) antiporter NhaA (398 aa).

A run of 12 helical transmembrane segments spans residues 8–28 (FLQL…LALI), 59–79 (LLLW…GMEI), 96–116 (LPVI…SFII), 124–144 (AGWA…LSLL), 154–174 (VFLL…IALF), 177–197 (AELH…LLML), 202–222 (VMLL…VLKS), 223–243 (GVHA…IRGA), 261–281 (YFIL…GLSW), 292–312 (IIVG…WLAV), 328–348 (LFGL…IGGL), and 362–382 (LGIL…LRNA).

It belongs to the NhaA Na(+)/H(+) (TC 2.A.33) antiporter family.

The protein resides in the cell inner membrane. It catalyses the reaction Na(+)(in) + 2 H(+)(out) = Na(+)(out) + 2 H(+)(in). Na(+)/H(+) antiporter that extrudes sodium in exchange for external protons. This chain is Na(+)/H(+) antiporter NhaA, found in Tolumonas auensis (strain DSM 9187 / NBRC 110442 / TA 4).